Here is a 135-residue protein sequence, read N- to C-terminus: Small ribosomal subunit protein bS16 (135 aa).

Positions 94 to 135 (IGTEMETWQQRNDSRLKRGLDRKAIRRKRKKEAEAKEKESAG) are disordered. 2 stretches are compositionally biased toward basic and acidic residues: residues 105–116 (NDSRLKRGLDRK) and 124–135 (KEAEAKEKESAG).

This sequence belongs to the bacterial ribosomal protein bS16 family.

The sequence is that of Small ribosomal subunit protein bS16 from Chloroherpeton thalassium (strain ATCC 35110 / GB-78).